Consider the following 683-residue polypeptide: Phosphomethylpyrimidine synthase (683 aa).

Substrate is bound by residues Asn-235, Met-264, Tyr-293, His-329, 349-351 (SRG), 390-393 (DGMR), and Glu-429. His-433 lines the Zn(2+) pocket. Tyr-456 contacts substrate. His-497 is a binding site for Zn(2+). [4Fe-4S] cluster is bound by residues Cys-577, Cys-580, and Cys-585. The interval 647-683 (RQSPGVESTSLESTSLESTVLESTSLESTALEKAKEV) is disordered. Residues 653–675 (ESTSLESTSLESTVLESTSLEST) show a composition bias toward low complexity.

Belongs to the ThiC family. As to quaternary structure, homodimer. [4Fe-4S] cluster serves as cofactor.

It catalyses the reaction 5-amino-1-(5-phospho-beta-D-ribosyl)imidazole + S-adenosyl-L-methionine = 4-amino-2-methyl-5-(phosphooxymethyl)pyrimidine + CO + 5'-deoxyadenosine + formate + L-methionine + 3 H(+). It functions in the pathway cofactor biosynthesis; thiamine diphosphate biosynthesis. Functionally, catalyzes the synthesis of the hydroxymethylpyrimidine phosphate (HMP-P) moiety of thiamine from aminoimidazole ribotide (AIR) in a radical S-adenosyl-L-methionine (SAM)-dependent reaction. This chain is Phosphomethylpyrimidine synthase, found in Shewanella loihica (strain ATCC BAA-1088 / PV-4).